The sequence spans 365 residues: Magnesium-chelatase subunit ChlI homolog (365 aa).

An ATP-binding site is contributed by Glu-40–Thr-47. Residues Phe-340–Lys-365 are disordered. The segment covering Asn-344–Lys-365 has biased composition (basic and acidic residues).

This sequence belongs to the Mg-chelatase subunits D/I family.

This is Magnesium-chelatase subunit ChlI homolog from Methanocaldococcus jannaschii (strain ATCC 43067 / DSM 2661 / JAL-1 / JCM 10045 / NBRC 100440) (Methanococcus jannaschii).